The primary structure comprises 284 residues: D-tagatose-1,6-bisphosphate aldolase subunit GatY (284 aa).

Asp82 serves as the catalytic Proton donor. Zn(2+) is bound by residues His83 and His180. Residue Gly181 coordinates dihydroxyacetone phosphate. His208 provides a ligand contact to Zn(2+). Residues 209–211 (GAS) and 230–233 (NVAT) each bind dihydroxyacetone phosphate.

It belongs to the class II fructose-bisphosphate aldolase family. TagBP aldolase GatY subfamily. As to quaternary structure, forms a complex with GatZ. Zn(2+) serves as cofactor.

It catalyses the reaction D-tagatofuranose 1,6-bisphosphate = D-glyceraldehyde 3-phosphate + dihydroxyacetone phosphate. It participates in carbohydrate metabolism; D-tagatose 6-phosphate degradation; D-glyceraldehyde 3-phosphate and glycerone phosphate from D-tagatose 6-phosphate: step 2/2. Its function is as follows. Catalytic subunit of the tagatose-1,6-bisphosphate aldolase GatYZ, which catalyzes the reversible aldol condensation of dihydroxyacetone phosphate (DHAP or glycerone-phosphate) with glyceraldehyde 3-phosphate (G3P) to produce tagatose 1,6-bisphosphate (TBP). Requires GatZ subunit for full activity and stability. Is involved in the catabolism of galactitol. The polypeptide is D-tagatose-1,6-bisphosphate aldolase subunit GatY (Escherichia coli O157:H7).